Consider the following 916-residue polypeptide: Protein translocase subunit SecA (916 aa).

ATP-binding positions include Gln87, 105–109 (GEGKT), and Asp507. The Zn(2+) site is built by Cys900, Cys902, Cys911, and His912.

The protein belongs to the SecA family. Monomer and homodimer. Part of the essential Sec protein translocation apparatus which comprises SecA, SecYEG and auxiliary proteins SecDF-YajC and YidC. Requires Zn(2+) as cofactor.

The protein localises to the cell inner membrane. The protein resides in the cytoplasm. It carries out the reaction ATP + H2O + cellular proteinSide 1 = ADP + phosphate + cellular proteinSide 2.. Part of the Sec protein translocase complex. Interacts with the SecYEG preprotein conducting channel. Has a central role in coupling the hydrolysis of ATP to the transfer of proteins into and across the cell membrane, serving both as a receptor for the preprotein-SecB complex and as an ATP-driven molecular motor driving the stepwise translocation of polypeptide chains across the membrane. The polypeptide is Protein translocase subunit SecA (Neisseria meningitidis serogroup C / serotype 2a (strain ATCC 700532 / DSM 15464 / FAM18)).